The chain runs to 446 residues: Chromosomal replication initiator protein DnaA (446 aa).

A domain I, interacts with DnaA modulators region spans residues 1-81 (MENISDLWNS…AKLAIRFIIP (81 aa)). The domain II stretch occupies residues 81 to 109 (PQSQAEEDIDLPPVKRNPAQDDSAHLPQS). Residues 110–326 (MLNPKYTFDT…GALIRVVAYS (217 aa)) form a domain III, AAA+ region region. Positions 154, 156, 157, and 158 each coordinate ATP. Positions 327 to 446 (SLINKDINAD…QVEEINGILK (120 aa)) are domain IV, binds dsDNA.

This sequence belongs to the DnaA family. In terms of assembly, oligomerizes as a right-handed, spiral filament on DNA at oriC.

It is found in the cytoplasm. Its function is as follows. Plays an essential role in the initiation and regulation of chromosomal replication. ATP-DnaA binds to the origin of replication (oriC) to initiate formation of the DNA replication initiation complex once per cell cycle. Binds the DnaA box (a 9 base pair repeat at the origin) and separates the double-stranded (ds)DNA. Forms a right-handed helical filament on oriC DNA; dsDNA binds to the exterior of the filament while single-stranded (ss)DNA is stabiized in the filament's interior. The ATP-DnaA-oriC complex binds and stabilizes one strand of the AT-rich DNA unwinding element (DUE), permitting loading of DNA polymerase. After initiation quickly degrades to an ADP-DnaA complex that is not apt for DNA replication. Binds acidic phospholipids. In Bacillus cereus (strain G9842), this protein is Chromosomal replication initiator protein DnaA.